A 70-amino-acid polypeptide reads, in one-letter code: Mu-agatoxin-Ao1a (70 aa).

Residues 1–20 form the signal peptide; sequence MKAIIFFCFLSVMVFIVAEA. A propeptide spanning residues 21-33 is cleaved from the precursor; it reads SSLEALKIFEGER. 4 disulfides stabilise this stretch: Cys-35–Cys-50, Cys-42–Cys-55, Cys-49–Cys-65, and Cys-57–Cys-63. Position 69 is an asparagine amide (Asn-69).

The protein belongs to the neurotoxin 07 (Beta/delta-agtx) family. 04 (aga-5) subfamily. As to expression, expressed by the venom gland.

The protein resides in the secreted. Its function is as follows. Insecticidal neurotoxin that modulates the insect Nav channel (DmNaV1/tipE (para/tipE)) in a unique manner, with both the activation and inactivation processes being affected. The voltage dependence of activation is shifted toward more hyperpolarized potentials (analogous to site 4 toxins) and a non-inactivating persistent sodium current is induced (site 3-like action). Interestingly, both effects take place in a voltage-dependent manner, producing a bell-shaped curve between -80 and 0 mV. In Agelena orientalis (Funnel-web spider), this protein is Mu-agatoxin-Ao1a.